A 560-amino-acid chain; its full sequence is Putative transport protein VIBHAR_02636 (560 aa).

A run of 5 helical transmembrane segments spans residues 8–28 (LLEQ…LAFG), 37–57 (LGNS…GFSF), 66–86 (FMLF…GIFF), 91–111 (HYFI…YFCS), and 164–184 (VGYA…AKLL). 2 consecutive RCK C-terminal domains span residues 205 to 292 (LGNS…FRNG) and 293 to 376 (KEVF…KIGF). 6 consecutive transmembrane segments (helical) span residues 386–406 (LLAF…TMTF), 409–429 (VSFS…LGFL), 450–470 (LGLM…IFEH), 478–498 (IIGL…LVGA), 505–525 (SALL…MDVV), and 539–559 (AGTY…LIIL).

Belongs to the AAE transporter (TC 2.A.81) family. YbjL subfamily.

The protein localises to the cell membrane. The protein is Putative transport protein VIBHAR_02636 of Vibrio campbellii (strain ATCC BAA-1116).